Here is a 367-residue protein sequence, read N- to C-terminus: UDP-N-acetylglucosamine--N-acetylmuramyl-(pentapeptide) pyrophosphoryl-undecaprenol N-acetylglucosamine transferase (367 aa).

UDP-N-acetyl-alpha-D-glucosamine-binding positions include 15 to 17 (TGG), Asn-127, Arg-163, Ser-191, Ile-249, and Gln-294.

It belongs to the glycosyltransferase 28 family. MurG subfamily.

Its subcellular location is the cell inner membrane. The enzyme catalyses di-trans,octa-cis-undecaprenyl diphospho-N-acetyl-alpha-D-muramoyl-L-alanyl-D-glutamyl-meso-2,6-diaminopimeloyl-D-alanyl-D-alanine + UDP-N-acetyl-alpha-D-glucosamine = di-trans,octa-cis-undecaprenyl diphospho-[N-acetyl-alpha-D-glucosaminyl-(1-&gt;4)]-N-acetyl-alpha-D-muramoyl-L-alanyl-D-glutamyl-meso-2,6-diaminopimeloyl-D-alanyl-D-alanine + UDP + H(+). It participates in cell wall biogenesis; peptidoglycan biosynthesis. Its function is as follows. Cell wall formation. Catalyzes the transfer of a GlcNAc subunit on undecaprenyl-pyrophosphoryl-MurNAc-pentapeptide (lipid intermediate I) to form undecaprenyl-pyrophosphoryl-MurNAc-(pentapeptide)GlcNAc (lipid intermediate II). This is UDP-N-acetylglucosamine--N-acetylmuramyl-(pentapeptide) pyrophosphoryl-undecaprenol N-acetylglucosamine transferase from Burkholderia orbicola (strain MC0-3).